A 944-amino-acid polypeptide reads, in one-letter code: Weak acid resistance protein 1 (944 aa).

The segment at residues 76–109 (CVCCHSLKQKCEPSDVNDIYRKPCRRCLKHKKLC) is a DNA-binding region (zn(2)-C6 fungal-type). Disordered stretches follow at residues 114-171 (SKRT…AKQF) and 197-225 (SYGA…SVPT). Threonine 128 is modified (phosphothreonine). Polar residues-rich tracts occupy residues 135 to 144 (VNVSTKSKGP) and 205 to 225 (TTST…SVPT).

In terms of assembly, homodimer. Post-translationally, phosphorylation is required for PDR12 induction.

The protein localises to the nucleus. Its function is as follows. transcription factor which binds to a weak acid response element (WARE) to mediate stress induction of PDR12 and FUN34, encoding an acid transporter and a putative ammonia transporter, respectively. In Saccharomyces cerevisiae (strain ATCC 204508 / S288c) (Baker's yeast), this protein is Weak acid resistance protein 1 (WAR1).